A 470-amino-acid chain; its full sequence is Box C/D snoRNA protein 1 (470 aa).

The disordered stretch occupies residues 1-70 (MEFAAENEGK…EEGSGQRPEE (70 aa)). Ser25 bears the Phosphoserine mark. The span at 41 to 51 (EFGGGEEGTGL) shows a compositional bias: gly residues. Glycyl lysine isopeptide (Lys-Gly) (interchain with G-Cter in SUMO2) cross-links involve residues Lys79, Lys108, Lys118, Lys138, Lys143, Lys153, Lys162, Lys173, Lys183, and Lys200. 8 residues coordinate Zn(2+): Cys220, Cys223, Cys232, Cys235, Cys240, Cys244, His248, and Cys254. The HIT-type zinc-finger motif lies at 220-254 (CETCGTEEAKYRCPRCMRYSCSLPCVKKHKAELTC). A Glycyl lysine isopeptide (Lys-Gly) (interchain with G-Cter in SUMO2) cross-link involves residue Lys459.

It belongs to the BCD1 family. In terms of assembly, interacts with FBL, SNU13, NOP58, NUFIP1, RUVBL1, RUVBL2 and TAF9. Interacts (via HIT-type zinc finger) with the RUVBL1/RUVBL2 complex in the presence of ADP.

Functionally, required for box C/D snoRNAs accumulation involved in snoRNA processing, snoRNA transport to the nucleolus and ribosome biogenesis. The sequence is that of Box C/D snoRNA protein 1 (ZNHIT6) from Homo sapiens (Human).